We begin with the raw amino-acid sequence, 179 residues long: Peptide deformylase (179 aa).

Fe cation is bound by residues C102 and H144. E145 is an active-site residue. H148 serves as a coordination point for Fe cation.

Belongs to the polypeptide deformylase family. The cofactor is Fe(2+).

The enzyme catalyses N-terminal N-formyl-L-methionyl-[peptide] + H2O = N-terminal L-methionyl-[peptide] + formate. Its function is as follows. Removes the formyl group from the N-terminal Met of newly synthesized proteins. Requires at least a dipeptide for an efficient rate of reaction. N-terminal L-methionine is a prerequisite for activity but the enzyme has broad specificity at other positions. In Wolbachia pipientis subsp. Culex pipiens (strain wPip), this protein is Peptide deformylase.